The chain runs to 79 residues: MATWLAIVLIVLALILGLVGGFFLARKYMMDYLKKNPPINEEMLRMMMMQMGQKPSQKKINQMMTMMNKNQQDQLKKSK.

A helical transmembrane segment spans residues 4-24 (WLAIVLIVLALILGLVGGFFL).

Belongs to the UPF0154 family.

The protein resides in the membrane. This is UPF0154 protein SSP1415 from Staphylococcus saprophyticus subsp. saprophyticus (strain ATCC 15305 / DSM 20229 / NCIMB 8711 / NCTC 7292 / S-41).